Consider the following 189-residue polypeptide: Probable nicotinate-nucleotide adenylyltransferase (189 aa).

It belongs to the NadD family.

The enzyme catalyses nicotinate beta-D-ribonucleotide + ATP + H(+) = deamido-NAD(+) + diphosphate. It participates in cofactor biosynthesis; NAD(+) biosynthesis; deamido-NAD(+) from nicotinate D-ribonucleotide: step 1/1. Its function is as follows. Catalyzes the reversible adenylation of nicotinate mononucleotide (NaMN) to nicotinic acid adenine dinucleotide (NaAD). The protein is Probable nicotinate-nucleotide adenylyltransferase of Bacillus cereus (strain AH820).